The chain runs to 314 residues: MKVTVIGAGNVGATVAECVARQDVAKEVVMVDIKDGMPQGKALDMRESSPIHGFDTRVTGTNDYGPTEDSDVCIITAGLPRSPGMSRDDLLAKNTEIVGGVTEQFVEGSPDSTIIVVANPLDVMTYVAYEASGFPTNRVMGMAGVLDTGRFRSFIAEELDVSVRDVQALLMGGHGDTMVPLPRYTTVGGIPVPQLIDDARIEEIVERTKGAGGEIVDLMGTSAWYAPGAAAAEMTEAILKDNKRILPCAAYCDGEYGLDDLFIGVPVKLGAGGVEEVIEVDLDADEKAQLKTSAGHVHSNLDDLQRLRDEGKIG.

NAD(+)-binding positions include 7–12 (GAGNVG) and aspartate 32. Substrate-binding residues include arginine 81 and arginine 87. Residues asparagine 94 and 117-119 (VAN) contribute to the NAD(+) site. Substrate is bound by residues asparagine 119 and arginine 150. Histidine 174 functions as the Proton acceptor in the catalytic mechanism.

Belongs to the LDH/MDH superfamily. MDH type 3 family.

It catalyses the reaction (S)-malate + NAD(+) = oxaloacetate + NADH + H(+). Its function is as follows. Catalyzes the reversible oxidation of malate to oxaloacetate. The polypeptide is Malate dehydrogenase (Salinibacter ruber (strain DSM 13855 / M31)).